The chain runs to 456 residues: MSAPRETIAAVATAQGRGGVGIVRISGPLASVAAKAISGRELKPRFAHYGPFFSDNQQVLDEGLALYFPGPNSFTGEDVLELQGHGGPIVLDMLLKRCLELGCRLARPGEFSERAFLNDKLDLAQAEAIADLIEASSAQAARNALRSLQGAFSQRVHNLTEQLIGLRIYVEAAIDFPEEEIDFLADGHVLSMLDKVRNELSTVLREAGQGALLRDGMTVVIAGRPNAGKSSLLNALAGREAAIVTEIAGTTRDILREHIHIDGMPLHVVDTAGLRDTDDHVEKIGVERALKAIGEADRVLLVVDATAPEAADPFALWPEFLETRPDPAKVTLIRNKADLTGEPIALEVSDDGHVTISLSAKSAGEGLDLLRDHLKACMGYEQTSESSFSARRRHLEALRHASDALEHGRAQLTLAGAGELLAEDLRQAQQSLGEITGAFSSDDLLGRIFSSFCIGK.

Residues R24, E81, and K120 each contribute to the (6S)-5-formyl-5,6,7,8-tetrahydrofolate site. One can recognise a TrmE-type G domain in the interval 216-379 (GMTVVIAGRP…LRDHLKACMG (164 aa)). Position 226 (N226) interacts with K(+). GTP-binding positions include 226 to 231 (NAGKSS), 245 to 251 (TEIAGTT), 270 to 273 (DTAG), and 335 to 338 (NKAD). S230 lines the Mg(2+) pocket. The K(+) site is built by T245, I247, and T250. Mg(2+) is bound at residue T251. K456 contacts (6S)-5-formyl-5,6,7,8-tetrahydrofolate.

Belongs to the TRAFAC class TrmE-Era-EngA-EngB-Septin-like GTPase superfamily. TrmE GTPase family. As to quaternary structure, homodimer. Heterotetramer of two MnmE and two MnmG subunits. The cofactor is K(+).

Its subcellular location is the cytoplasm. Its function is as follows. Exhibits a very high intrinsic GTPase hydrolysis rate. Involved in the addition of a carboxymethylaminomethyl (cmnm) group at the wobble position (U34) of certain tRNAs, forming tRNA-cmnm(5)s(2)U34. The polypeptide is tRNA modification GTPase MnmE (Pseudomonas fluorescens (strain Pf0-1)).